A 316-amino-acid chain; its full sequence is Probable cell division protein WhiA (316 aa).

Positions 275 to 309 (TLKELGEMVSGGKISKSGINHRLRKIDEIAEKLRA) form a DNA-binding region, H-T-H motif.

Belongs to the WhiA family.

In terms of biological role, involved in cell division and chromosome segregation. The chain is Probable cell division protein WhiA from Bacillus cereus (strain B4264).